Reading from the N-terminus, the 529-residue chain is BTB/POZ domain-containing protein 6 (529 aa).

The BTB domain occupies 127–197 (ADVHFIVGPA…LYSDEIDLEA (71 aa)).

As to quaternary structure, homodimer and heterodimer. Interacts with cul3 via the BTB domain.

Its subcellular location is the cytoplasm. Functionally, adapter protein for the cul3 E3 ubiquitin-protein ligase complex. Involved in late neuronal development and muscle formation. This chain is BTB/POZ domain-containing protein 6 (btbd6), found in Xenopus tropicalis (Western clawed frog).